The following is a 107-amino-acid chain: Iron-binding protein IscA (107 aa).

3 residues coordinate Fe cation: Cys-35, Cys-99, and Cys-101.

It belongs to the HesB/IscA family. In terms of assembly, homodimer; may form tetramers and higher multimers. Requires Fe cation as cofactor.

Is able to transfer iron-sulfur clusters to apo-ferredoxin. Multiple cycles of [2Fe2S] cluster formation and transfer are observed, suggesting that IscA acts catalytically. Recruits intracellular free iron so as to provide iron for the assembly of transient iron-sulfur cluster in IscU in the presence of IscS, L-cysteine and the thioredoxin reductase system TrxA/TrxB. In Yersinia enterocolitica serotype O:8 / biotype 1B (strain NCTC 13174 / 8081), this protein is Iron-binding protein IscA.